Reading from the N-terminus, the 61-residue chain is Large ribosomal subunit protein uL30 (61 aa).

Belongs to the universal ribosomal protein uL30 family. In terms of assembly, part of the 50S ribosomal subunit.

The protein is Large ribosomal subunit protein uL30 of Chlorobaculum parvum (strain DSM 263 / NCIMB 8327) (Chlorobium vibrioforme subsp. thiosulfatophilum).